Here is a 249-residue protein sequence, read N- to C-terminus: Putative TrmH family tRNA/rRNA methyltransferase YacO (249 aa).

3 residues coordinate S-adenosyl-L-methionine: glycine 198, leucine 218, and leucine 227.

Belongs to the class IV-like SAM-binding methyltransferase superfamily. RNA methyltransferase TrmH family.

The sequence is that of Putative TrmH family tRNA/rRNA methyltransferase YacO (yacO) from Bacillus subtilis (strain 168).